A 492-amino-acid chain; its full sequence is Bifunctional purine biosynthesis protein PurH (492 aa).

In terms of domain architecture, MGS-like spans 1–144 (MKKAILSVSN…KNYKHVTTIV (144 aa)).

The protein belongs to the PurH family.

It catalyses the reaction (6R)-10-formyltetrahydrofolate + 5-amino-1-(5-phospho-beta-D-ribosyl)imidazole-4-carboxamide = 5-formamido-1-(5-phospho-D-ribosyl)imidazole-4-carboxamide + (6S)-5,6,7,8-tetrahydrofolate. The enzyme catalyses IMP + H2O = 5-formamido-1-(5-phospho-D-ribosyl)imidazole-4-carboxamide. Its pathway is purine metabolism; IMP biosynthesis via de novo pathway; 5-formamido-1-(5-phospho-D-ribosyl)imidazole-4-carboxamide from 5-amino-1-(5-phospho-D-ribosyl)imidazole-4-carboxamide (10-formyl THF route): step 1/1. It functions in the pathway purine metabolism; IMP biosynthesis via de novo pathway; IMP from 5-formamido-1-(5-phospho-D-ribosyl)imidazole-4-carboxamide: step 1/1. The polypeptide is Bifunctional purine biosynthesis protein PurH (Staphylococcus aureus (strain bovine RF122 / ET3-1)).